Consider the following 410-residue polypeptide: LL-diaminopimelate aminotransferase (410 aa).

Substrate contacts are provided by Tyr-15 and Gly-42. Pyridoxal 5'-phosphate-binding positions include Tyr-72, 108-109 (SK), Tyr-132, Asn-187, Tyr-218, and 246-248 (SFS). Substrate contacts are provided by Lys-109, Tyr-132, and Asn-187. Position 249 is an N6-(pyridoxal phosphate)lysine (Lys-249). Arg-257 and Asn-292 together coordinate pyridoxal 5'-phosphate. The substrate site is built by Asn-292 and Arg-388.

The protein belongs to the class-I pyridoxal-phosphate-dependent aminotransferase family. LL-diaminopimelate aminotransferase subfamily. As to quaternary structure, homodimer. It depends on pyridoxal 5'-phosphate as a cofactor.

It catalyses the reaction (2S,6S)-2,6-diaminopimelate + 2-oxoglutarate = (S)-2,3,4,5-tetrahydrodipicolinate + L-glutamate + H2O + H(+). Its pathway is amino-acid biosynthesis; L-lysine biosynthesis via DAP pathway; LL-2,6-diaminopimelate from (S)-tetrahydrodipicolinate (aminotransferase route): step 1/1. In terms of biological role, involved in the synthesis of meso-diaminopimelate (m-DAP or DL-DAP), required for both lysine and peptidoglycan biosynthesis. Catalyzes the direct conversion of tetrahydrodipicolinate to LL-diaminopimelate. The protein is LL-diaminopimelate aminotransferase of Thermosynechococcus vestitus (strain NIES-2133 / IAM M-273 / BP-1).